The chain runs to 105 residues: Large ribosomal subunit protein uL23 (105 aa).

The protein belongs to the universal ribosomal protein uL23 family. As to quaternary structure, part of the 50S ribosomal subunit. Contacts protein L29, and trigger factor when it is bound to the ribosome.

One of the early assembly proteins it binds 23S rRNA. One of the proteins that surrounds the polypeptide exit tunnel on the outside of the ribosome. Forms the main docking site for trigger factor binding to the ribosome. The chain is Large ribosomal subunit protein uL23 from Ureaplasma urealyticum serovar 10 (strain ATCC 33699 / Western).